We begin with the raw amino-acid sequence, 367 residues long: Methylthioribose-1-phosphate isomerase (367 aa).

The active-site Proton donor is the Asp250.

The protein belongs to the eIF-2B alpha/beta/delta subunits family. MtnA subfamily.

It is found in the cytoplasm. It localises to the nucleus. The enzyme catalyses 5-(methylsulfanyl)-alpha-D-ribose 1-phosphate = 5-(methylsulfanyl)-D-ribulose 1-phosphate. Its pathway is amino-acid biosynthesis; L-methionine biosynthesis via salvage pathway; L-methionine from S-methyl-5-thio-alpha-D-ribose 1-phosphate: step 1/6. Functionally, catalyzes the interconversion of methylthioribose-1-phosphate (MTR-1-P) into methylthioribulose-1-phosphate (MTRu-1-P). The polypeptide is Methylthioribose-1-phosphate isomerase (IDI2) (Hordeum vulgare (Barley)).